An 82-amino-acid chain; its full sequence is UPF0410 protein YeaQ (82 aa).

2 consecutive transmembrane segments (helical) span residues 26 to 46 (GGGF…GGWI) and 57 to 77 (GFNF…LFIY).

Belongs to the UPF0410 family.

Its subcellular location is the cell inner membrane. The sequence is that of UPF0410 protein YeaQ (yeaQ) from Escherichia coli O157:H7.